A 431-amino-acid chain; its full sequence is Trigger factor (431 aa).

In terms of domain architecture, PPIase FKBP-type spans 160–245 (DDRVTIDFVG…VKKVEVMVLP (86 aa)).

This sequence belongs to the FKBP-type PPIase family. Tig subfamily.

The protein resides in the cytoplasm. It carries out the reaction [protein]-peptidylproline (omega=180) = [protein]-peptidylproline (omega=0). In terms of biological role, involved in protein export. Acts as a chaperone by maintaining the newly synthesized protein in an open conformation. Functions as a peptidyl-prolyl cis-trans isomerase. This Mannheimia succiniciproducens (strain KCTC 0769BP / MBEL55E) protein is Trigger factor.